The following is a 536-amino-acid chain: Thiamine transport system permease protein ThiP (536 aa).

Helical transmembrane passes span 16–36 (GLCAAALMITVSLAAFLALWL), 58–78 (FSFWQAFLSAVLSVVPAVFLA), 95–115 (LCAMTLILPVLVAVFGILSVY), 134–154 (FSPYGLQGILLAHVFFNLPMA), 199–219 (VAALIFMLCFASFATVLSLGG), 240–260 (PARAAMLALIQMVCCLALVLL), 291–311 (DALLIVLALLLLLPPLVAVVV), 334–354 (SLRIALAAGVLCVVLTMMLLW), 373–393 (LSGMLILAMPGIVLATGFFLL), 404–424 (ADGIVIFTNALMAIPYALKVL), 463–483 (AQALAFACVLSIGDFGVVALF), and 506–526 (DGAVTALILLLLCFTLFTLIE). The region spanning 56 to 261 (VRFSFWQAFL…VCCLALVLLS (206 aa)) is the ABC transmembrane type-1 1 domain. In terms of domain architecture, ABC transmembrane type-1 2 spans 331 to 525 (VWTSLRIALA…LLCFTLFTLI (195 aa)).

Belongs to the binding-protein-dependent transport system permease family. As to quaternary structure, the complex is composed of two ATP-binding proteins (ThiQ), two transmembrane proteins (ThiP) and a solute-binding protein (ThiB).

The protein resides in the cell inner membrane. Its function is as follows. Part of the ABC transporter complex ThiBPQ involved in thiamine import. Probably responsible for the translocation of the substrate across the membrane. Is also involved in thiamine pyrophosphate transport. The polypeptide is Thiamine transport system permease protein ThiP (Salmonella typhimurium (strain LT2 / SGSC1412 / ATCC 700720)).